The chain runs to 326 residues: Cytosolic sulfotransferase 7 (326 aa).

72-77 contributes to the 3'-phosphoadenylyl sulfate binding site; the sequence is KSGTTW. Residue His138 is the Proton acceptor of the active site. Residues Arg160, Ser168, Tyr226, and 292–294 contribute to the 3'-phosphoadenylyl sulfate site; that span reads RKG.

This sequence belongs to the sulfotransferase 1 family.

Its subcellular location is the cytoplasm. Sulfotransferase that utilizes 3'-phospho-5'-adenylyl sulfate (PAPS) as sulfonate donor. The protein is Cytosolic sulfotransferase 7 (SOT7) of Arabidopsis thaliana (Mouse-ear cress).